We begin with the raw amino-acid sequence, 71 residues long: uncharacterized protein (71 aa).

The Sm domain occupies 15–71; it reads PNFEYARRLNGKKVKIFLRNGEVLDAEVTGVSNYEIMVKVGDRNLLVFKHAIDYIEY.

This is an uncharacterized protein from Methanocaldococcus jannaschii (strain ATCC 43067 / DSM 2661 / JAL-1 / JCM 10045 / NBRC 100440) (Methanococcus jannaschii).